Consider the following 213-residue polypeptide: Orotate phosphoribosyltransferase (213 aa).

K26 contributes to the 5-phospho-alpha-D-ribose 1-diphosphate binding site. 34-35 (FF) lines the orotate pocket. Residues 72–73 (YK), R99, K100, K103, H105, and 124–132 (DDVITAGTA) contribute to the 5-phospho-alpha-D-ribose 1-diphosphate site. Orotate is bound by residues T128 and R156.

The protein belongs to the purine/pyrimidine phosphoribosyltransferase family. PyrE subfamily. Homodimer. It depends on Mg(2+) as a cofactor.

The catalysed reaction is orotidine 5'-phosphate + diphosphate = orotate + 5-phospho-alpha-D-ribose 1-diphosphate. The protein operates within pyrimidine metabolism; UMP biosynthesis via de novo pathway; UMP from orotate: step 1/2. In terms of biological role, catalyzes the transfer of a ribosyl phosphate group from 5-phosphoribose 1-diphosphate to orotate, leading to the formation of orotidine monophosphate (OMP). This chain is Orotate phosphoribosyltransferase, found in Alteromonas mediterranea (strain DSM 17117 / CIP 110805 / LMG 28347 / Deep ecotype).